The sequence spans 317 residues: 2,3,4,5-tetrahydropyridine-2,6-dicarboxylate N-succinyltransferase (317 aa).

Mg(2+) is bound by residues Asp166 and Glu183. The active-site Acyl-anhydride intermediate is Glu199. Residues Arg201, Gly216, Ser219, Ala242, 257-258 (EA), Gly265, Lys277, and 290-293 (RRNS) contribute to the succinyl-CoA site.

It belongs to the type 2 tetrahydrodipicolinate N-succinyltransferase family. Homotrimer.

The protein resides in the cytoplasm. The enzyme catalyses (S)-2,3,4,5-tetrahydrodipicolinate + succinyl-CoA + H2O = (S)-2-succinylamino-6-oxoheptanedioate + CoA. It participates in amino-acid biosynthesis; L-lysine biosynthesis via DAP pathway; LL-2,6-diaminopimelate from (S)-tetrahydrodipicolinate (succinylase route): step 1/3. Functionally, catalyzes the conversion of the cyclic tetrahydrodipicolinate (THDP) into the acyclic N-succinyl-L-2-amino-6-oxopimelate using succinyl-CoA. In Mycobacterium tuberculosis (strain CDC 1551 / Oshkosh), this protein is 2,3,4,5-tetrahydropyridine-2,6-dicarboxylate N-succinyltransferase (dapD).